A 469-amino-acid polypeptide reads, in one-letter code: Cyclin-dependent kinase 14 (469 aa).

3 positions are modified to phosphoserine: Ser-24, Ser-78, and Ser-95. The tract at residues 103-133 (FKTSSTGKESPKVRRHSSPSSPTSPKFGKAD) is disordered. Ser-134 carries the post-translational modification Phosphoserine. Positions 135–419 (YEKLEKLGEG…AQAALSHEYF (285 aa)) constitute a Protein kinase domain. Residues 141–149 (LGEGSYATV) and Lys-164 each bind ATP. Asp-256 functions as the Proton acceptor in the catalytic mechanism. Residues 449–469 (ESMRAFGKNNSYGKSLSNSKH) are disordered. The segment covering 456–469 (KNNSYGKSLSNSKH) has biased composition (polar residues).

This sequence belongs to the protein kinase superfamily. CMGC Ser/Thr protein kinase family. CDC2/CDKX subfamily. In terms of assembly, found in a complex with LRP6, CCNY and CAPRIN2 during G2/M stage; CAPRIN2 functions as a scaffold for the complex by binding to CCNY via its N terminus and to CDK14 via its C terminus. Interacts with CCNY; CCNY mediates its recruitment to the plasma membrane and promotes phosphorylation of LRP6. Interacts with CCDN3 and CDKN1A. Interacts with SEPT8. Interacts with 14-3-3 proteina YWHAB, YWHAE, YWHAH and YWHAQ. As to expression, highly expressed in brain, pancreas, kidney, heart, testis and ovary. Also detected at lower levels in other tissues except in spleen and thymus where expression is barely detected.

It localises to the cell membrane. The protein resides in the cytoplasm. It is found in the nucleus. It carries out the reaction L-seryl-[protein] + ATP = O-phospho-L-seryl-[protein] + ADP + H(+). It catalyses the reaction L-threonyl-[protein] + ATP = O-phospho-L-threonyl-[protein] + ADP + H(+). Serine/threonine-protein kinase activity is promoted by associated cyclins CCDN3 and CCNY and repressed by CDKN1A. Functionally, serine/threonine-protein kinase involved in the control of the eukaryotic cell cycle, whose activity is controlled by an associated cyclin. Acts as a cell-cycle regulator of Wnt signaling pathway during G2/M phase by mediating the phosphorylation of LRP6 at 'Ser-1490', leading to the activation of the Wnt signaling pathway. Acts as a regulator of cell cycle progression and cell proliferation via its interaction with CCDN3. Phosphorylates RB1 in vitro, however the relevance of such result remains to be confirmed in vivo. May also play a role in meiosis, neuron differentiation and may indirectly act as a negative regulator of insulin-responsive glucose transport. The chain is Cyclin-dependent kinase 14 (CDK14) from Homo sapiens (Human).